Consider the following 1212-residue polypeptide: Probable serine/threonine-protein kinase DDB_G0284491 (1212 aa).

A helical transmembrane segment spans residues 197–217 (LFHSFSLLNLYVYLIIVIRII). N-linked (GlcNAc...) asparagine glycosylation is found at N229, N299, N309, N328, N335, N341, N344, N391, N419, N422, N426, N427, N435, and N499. The interval 288 to 329 (LNNNNDNNLNNNNSNNNLNNNNNSNSNFNNDNNLNSNINSND) is disordered. 2 disordered regions span residues 412 to 439 (GNSNSGSNNSNSSNNNSSSNSLINNSGG) and 489 to 517 (IIKNNNNNNNNNSNNNNNNNDEDDSDYEE). Residues 489–507 (IIKNNNNNNNNNSNNNNNN) are compositionally biased toward low complexity. The span at 508 to 517 (NDEDDSDYEE) shows a compositional bias: acidic residues. A helical transmembrane segment spans residues 673–693 (IQIFDDYSLIIALRLLMNFIL). Over residues 703-720 (VPPPPTQPSSRPQSPPTV) the composition is skewed to pro residues. 2 disordered regions span residues 703 to 733 (VPPPPTQPSSRPQSPPTVSPLTPLNNHHHSG) and 751 to 813 (EVVS…NNNN). The region spanning 865 to 1182 (ETEIEPFASG…EVYNDLQDIY (318 aa)) is the Protein kinase domain. ATP-binding positions include 871-879 (FASGGQANI) and K924. The active-site Proton acceptor is the D1035.

The protein belongs to the protein kinase superfamily. Ser/Thr protein kinase family.

The protein resides in the membrane. It carries out the reaction L-seryl-[protein] + ATP = O-phospho-L-seryl-[protein] + ADP + H(+). The catalysed reaction is L-threonyl-[protein] + ATP = O-phospho-L-threonyl-[protein] + ADP + H(+). The protein is Probable serine/threonine-protein kinase DDB_G0284491 of Dictyostelium discoideum (Social amoeba).